Here is a 251-residue protein sequence, read N- to C-terminus: tRNA1(Val) (adenine(37)-N6)-methyltransferase (251 aa).

This sequence belongs to the methyltransferase superfamily. tRNA (adenine-N(6)-)-methyltransferase family.

The protein resides in the cytoplasm. It catalyses the reaction adenosine(37) in tRNA1(Val) + S-adenosyl-L-methionine = N(6)-methyladenosine(37) in tRNA1(Val) + S-adenosyl-L-homocysteine + H(+). Its function is as follows. Specifically methylates the adenine in position 37 of tRNA(1)(Val) (anticodon cmo5UAC). The protein is tRNA1(Val) (adenine(37)-N6)-methyltransferase of Shewanella frigidimarina (strain NCIMB 400).